The following is a 238-amino-acid chain: VIGGDECNINERNFLVALYEYWSQSFLCGGTLINGEWVLTAAHCDRKHILIYVGVHDRSVQFDKEQRRFPKEKYFFNCRNNFTKWDKDIMLIRLNKPVSYSEHIAPLSLPSSPPIVGSVCRVMGWGTIKSPQETLPDVPHCANINLLDYGVCRTAHPQFRLPATSRILCAGVLEGGIDTCHRDSGGPLICNGEFQGIVSWGDGSCAQPDKPALYSKVFDHLDWIQNIIAGSETVNCPS.

One can recognise a Peptidase S1 domain in the interval 1 to 229 (VIGGDECNIN…HLDWIQNIIA (229 aa)). Intrachain disulfides connect cysteine 7/cysteine 141, cysteine 28/cysteine 44, cysteine 78/cysteine 236, cysteine 120/cysteine 190, cysteine 152/cysteine 169, and cysteine 180/cysteine 205. Histidine 43 serves as the catalytic Charge relay system. N-linked (GlcNAc...) asparagine glycosylation is present at asparagine 81. Residue aspartate 88 is the Charge relay system of the active site. The active-site Charge relay system is the serine 184.

Belongs to the peptidase S1 family. Snake venom subfamily. As to quaternary structure, monomer. In terms of tissue distribution, expressed by the venom gland.

The protein resides in the secreted. Thrombin-like snake venom serine protease. Displays a specificity similar to trypsin. Releases only fibrinopeptide A in the conversion of fibrinogen (FGA) to fibrin. Shows coagulant, esterase and amidase activities. Reversibly increases the permeability of the blood brain barrier (BBB) in mice. Induces the barrel rotation syndrome in mice, which is manifested by gyroxin-like, rapid rolling motions. This syndrome may be due to its effect on BBB permeability, and certainly also to other actions affecting endogenous substrates present in the endothelium, nervous tissues or blood. This Crotalus durissus terrificus (South American rattlesnake) protein is Thrombin-like enzyme gyroxin B2.1.